The following is a 356-amino-acid chain: Putative zinc finger protein At1g68190 (356 aa).

The Zn(2+) site is built by cysteine 14, cysteine 17, cysteine 37, histidine 42, cysteine 57, cysteine 60, cysteine 80, and histidine 85. The segment at 14–56 (CEFCKAYRAVVYCIADTANLCLTCDAKVHSANSLSGRHLRTVL) adopts a B box-type 1; atypical zinc-finger fold. The B box-type 2; atypical zinc finger occupies 57–97 (CDSCKNQPCVVRCFDHKMFLCHGCNDKFHGGGSSEHRRRDL). Residues 159 to 178 (ENGSSSLTERGDPSPLELPK) form a disordered region.

This sequence belongs to the CONSTANS family.

Its subcellular location is the nucleus. The protein is Putative zinc finger protein At1g68190 of Arabidopsis thaliana (Mouse-ear cress).